We begin with the raw amino-acid sequence, 167 residues long: MAAAEPLTAFSRWYLYAIHGYFCEVMFTAAWEFVVNFNWKFPGVTSVWALFIYGTSILIVEKMYLYLKDKCHILVRCFIYTLWTYLWEFTTGLILRQFNACPWDYSQFDFDFMGLITLEYAIPWFCASFIMEQLVIRNTLRLRFDETAEPGAPTVPVALANGHVKTD.

The Cytoplasmic portion of the chain corresponds to 1 to 14; it reads MAAAEPLTAFSRWY. A helical membrane pass occupies residues 15-35; it reads LYAIHGYFCEVMFTAAWEFVV. Over 36–40 the chain is Extracellular; sequence NFNWK. A helical membrane pass occupies residues 41 to 61; it reads FPGVTSVWALFIYGTSILIVE. The Cytoplasmic segment spans residues 62–72; that stretch reads KMYLYLKDKCH. Residues 73–93 traverse the membrane as a helical segment; the sequence is ILVRCFIYTLWTYLWEFTTGL. Topologically, residues 94-109 are extracellular; it reads ILRQFNACPWDYSQFD. The chain crosses the membrane as a helical span at residues 110–130; the sequence is FDFMGLITLEYAIPWFCASFI. Residues 131-167 lie on the Cytoplasmic side of the membrane; it reads MEQLVIRNTLRLRFDETAEPGAPTVPVALANGHVKTD.

Belongs to the TMEM229 family.

It localises to the membrane. The protein is Transmembrane protein 229B (TMEM229B) of Gallus gallus (Chicken).